Consider the following 363-residue polypeptide: Flagellar P-ring protein (363 aa).

A signal peptide spans 1–20 (MKKLTLVLFGMLFLASSAHA).

Belongs to the FlgI family. As to quaternary structure, the basal body constitutes a major portion of the flagellar organelle and consists of four rings (L,P,S, and M) mounted on a central rod.

Its subcellular location is the periplasm. It is found in the bacterial flagellum basal body. Assembles around the rod to form the L-ring and probably protects the motor/basal body from shearing forces during rotation. The protein is Flagellar P-ring protein of Vibrio atlanticus (strain LGP32) (Vibrio splendidus (strain Mel32)).